The chain runs to 244 residues: 15,16-dihydrobiliverdin:ferredoxin oxidoreductase (244 aa).

It belongs to the HY2 family.

The enzyme catalyses 15,16-dihydrobiliverdin + oxidized 2[4Fe-4S]-[ferredoxin] = biliverdin IXalpha + reduced 2[4Fe-4S]-[ferredoxin] + 2 H(+). Functionally, catalyzes the two-electron reduction of biliverdin IX-alpha at the C15 methine bridge. The sequence is that of 15,16-dihydrobiliverdin:ferredoxin oxidoreductase (pebA) from Nostoc punctiforme (strain ATCC 29133 / PCC 73102).